Here is a 212-residue protein sequence, read N- to C-terminus: Large ribosomal subunit protein uL3 (212 aa).

Residues Arg-134–Pro-155 form a disordered region. The residue at position 153 (Gln-153) is an N5-methylglutamine.

The protein belongs to the universal ribosomal protein uL3 family. Part of the 50S ribosomal subunit. Forms a cluster with proteins L14 and L19. Methylated by PrmB.

Functionally, one of the primary rRNA binding proteins, it binds directly near the 3'-end of the 23S rRNA, where it nucleates assembly of the 50S subunit. This is Large ribosomal subunit protein uL3 from Pseudoalteromonas atlantica (strain T6c / ATCC BAA-1087).